An 89-amino-acid polypeptide reads, in one-letter code: Small ribosomal subunit protein uS15 (89 aa).

The protein belongs to the universal ribosomal protein uS15 family. As to quaternary structure, part of the 30S ribosomal subunit. Forms a bridge to the 50S subunit in the 70S ribosome, contacting the 23S rRNA.

Its function is as follows. One of the primary rRNA binding proteins, it binds directly to 16S rRNA where it helps nucleate assembly of the platform of the 30S subunit by binding and bridging several RNA helices of the 16S rRNA. In terms of biological role, forms an intersubunit bridge (bridge B4) with the 23S rRNA of the 50S subunit in the ribosome. The polypeptide is Small ribosomal subunit protein uS15 (Photorhabdus laumondii subsp. laumondii (strain DSM 15139 / CIP 105565 / TT01) (Photorhabdus luminescens subsp. laumondii)).